Here is a 399-residue protein sequence, read N- to C-terminus: Tryptophan synthase beta chain (399 aa).

At lysine 92 the chain carries N6-(pyridoxal phosphate)lysine.

Belongs to the TrpB family. In terms of assembly, tetramer of two alpha and two beta chains. Pyridoxal 5'-phosphate is required as a cofactor.

The enzyme catalyses (1S,2R)-1-C-(indol-3-yl)glycerol 3-phosphate + L-serine = D-glyceraldehyde 3-phosphate + L-tryptophan + H2O. It participates in amino-acid biosynthesis; L-tryptophan biosynthesis; L-tryptophan from chorismate: step 5/5. In terms of biological role, the beta subunit is responsible for the synthesis of L-tryptophan from indole and L-serine. This Legionella pneumophila subsp. pneumophila (strain Philadelphia 1 / ATCC 33152 / DSM 7513) protein is Tryptophan synthase beta chain.